Reading from the N-terminus, the 343-residue chain is Ribosomal RNA small subunit methyltransferase, chloroplastic (343 aa).

Residues 1–48 constitute a chloroplast transit peptide; that stretch reads MMNAVITSATINCNSLSPSWTCGDNSPSKLLLGEISAALSRRRTVKVS. Histidine 78, methionine 80, glycine 105, glutamate 126, aspartate 151, and asparagine 183 together coordinate S-adenosyl-L-methionine.

It belongs to the class I-like SAM-binding methyltransferase superfamily. rRNA adenine N(6)-methyltransferase family.

The protein localises to the plastid. It localises to the chloroplast. Required for methylation of the 3' adenosines in the small subunit of plastid rRNA. Essential for chloroplast biogenesis at low temperatures. This Arabidopsis thaliana (Mouse-ear cress) protein is Ribosomal RNA small subunit methyltransferase, chloroplastic.